The chain runs to 89 residues: Small ribosomal subunit protein uS17 (89 aa).

The protein belongs to the universal ribosomal protein uS17 family. In terms of assembly, part of the 30S ribosomal subunit.

In terms of biological role, one of the primary rRNA binding proteins, it binds specifically to the 5'-end of 16S ribosomal RNA. The chain is Small ribosomal subunit protein uS17 from Coxiella burnetii (strain RSA 493 / Nine Mile phase I).